A 172-amino-acid chain; its full sequence is Inorganic pyrophosphatase (172 aa).

Substrate-binding residues include K28, R42, and Y54. Mg(2+)-binding residues include D64, D69, and D101. Y140 serves as a coordination point for substrate.

It belongs to the PPase family. In terms of assembly, homohexamer. It depends on Mg(2+) as a cofactor.

The protein resides in the cytoplasm. The enzyme catalyses diphosphate + H2O = 2 phosphate + H(+). Catalyzes the hydrolysis of inorganic pyrophosphate (PPi) forming two phosphate ions. The sequence is that of Inorganic pyrophosphatase from Campylobacter jejuni subsp. jejuni serotype O:2 (strain ATCC 700819 / NCTC 11168).